A 233-amino-acid polypeptide reads, in one-letter code: MAKLTKRMRVIREKVDGTKSYDINEAVALLKELATAKFVESVDVAVNLGIDPRKSDQNVRGATVLPHGTGRDVRVAVFTQGANAEAAKAAGAELVGMDDLAEKIKAGEMNFDVVIASPDAMRVVGMLGQILGPRGLMPNPKTGTVTPNVAEAVKNAKAGQVRYRNDKNGIIHTTIGKVDFTPVQLKENLEALVSALKKAKPAVAKGIFVKKISISTTMGAGVAVDQATLETTV.

Belongs to the universal ribosomal protein uL1 family. As to quaternary structure, part of the 50S ribosomal subunit.

In terms of biological role, binds directly to 23S rRNA. The L1 stalk is quite mobile in the ribosome, and is involved in E site tRNA release. Functionally, protein L1 is also a translational repressor protein, it controls the translation of the L11 operon by binding to its mRNA. This chain is Large ribosomal subunit protein uL1, found in Shewanella baltica (strain OS185).